The following is a 285-amino-acid chain: Cold sensitive U2 snRNA suppressor 2 (285 aa).

One can recognise an RRM 1 domain in the interval 45–130 (TSIYISGLPT…KQIRVERAQF (86 aa)). Basic and acidic residues predominate over residues 135–149 (GDNMHGKENDLKEFN). A disordered region spans residues 135-154 (GDNMHGKENDLKEFNGPEPP). Phosphoserine is present on S163. The RRM 2 domain occupies 183 to 265 (RTVIFANVFN…QKLLAFISGD (83 aa)). Residues 265–285 (DENTSSTSDKNEDSEVEDDLI) are disordered. The span at 276–285 (EDSEVEDDLI) shows a compositional bias: acidic residues.

The protein belongs to the HTATSF1 family. In terms of assembly, interacts with PRP11. Associates with the U2 snRNA.

U2 snRNP protein which helps to refold U2 into a structure favorable for its binding to SF3b and SF3a prior to spliceosome assembly. Mediates functional interactions between U2 RNA and PRP5. Enforces ATP dependence during formation of the prespliceosome by brokering an interaction between PRP5 and the U2 snRNP that depends on correct U2 RNA structure. This is Cold sensitive U2 snRNA suppressor 2 (CUS2) from Saccharomyces cerevisiae (strain ATCC 204508 / S288c) (Baker's yeast).